Consider the following 314-residue polypeptide: Replication initiation protein (314 aa).

Positions 1–18 (MSKKAEEIQAKQSLEKEN) are enriched in basic and acidic residues. The interval 1–25 (MSKKAEEIQAKQSLEKENSNFSKTG) is disordered.

Belongs to the plasmid replication initiation factor family.

This protein is probably a specific topoisomerase involved in initiating replication. This protein is specifically required and may be rate-limiting for replication of the plasmid in vivo. The chain is Replication initiation protein (repE) from Staphylococcus aureus.